A 367-amino-acid polypeptide reads, in one-letter code: Methylthioribose-1-phosphate isomerase (367 aa).

Asp250 serves as the catalytic Proton donor.

It belongs to the eIF-2B alpha/beta/delta subunits family. MtnA subfamily.

It localises to the cytoplasm. Its subcellular location is the nucleus. It carries out the reaction 5-(methylsulfanyl)-alpha-D-ribose 1-phosphate = 5-(methylsulfanyl)-D-ribulose 1-phosphate. It participates in amino-acid biosynthesis; L-methionine biosynthesis via salvage pathway; L-methionine from S-methyl-5-thio-alpha-D-ribose 1-phosphate: step 1/6. In terms of biological role, catalyzes the interconversion of methylthioribose-1-phosphate (MTR-1-P) into methylthioribulose-1-phosphate (MTRu-1-P). This is Methylthioribose-1-phosphate isomerase (IDI2) from Zea mays (Maize).